The primary structure comprises 117 residues: Phosphoribosyl-ATP pyrophosphatase (117 aa).

The segment covering 96–105 has biased composition (basic and acidic residues); sequence GVSGIEEKLS. Residues 96–117 form a disordered region; it reads GVSGIEEKLSRSQNQPEPTKAE. Residues 106–117 show a composition bias toward polar residues; that stretch reads RSQNQPEPTKAE.

Belongs to the PRA-PH family.

The protein resides in the cytoplasm. The enzyme catalyses 1-(5-phospho-beta-D-ribosyl)-ATP + H2O = 1-(5-phospho-beta-D-ribosyl)-5'-AMP + diphosphate + H(+). Its pathway is amino-acid biosynthesis; L-histidine biosynthesis; L-histidine from 5-phospho-alpha-D-ribose 1-diphosphate: step 2/9. The polypeptide is Phosphoribosyl-ATP pyrophosphatase (Nitrosomonas eutropha (strain DSM 101675 / C91 / Nm57)).